We begin with the raw amino-acid sequence, 313 residues long: tRNA dimethylallyltransferase (313 aa).

17 to 24 lines the ATP pocket; the sequence is GPTASGKT. Residue 19 to 24 participates in substrate binding; it reads TASGKT. Interaction with substrate tRNA regions lie at residues 42–45, 166–170, 247–252, and 280–287; these read DSAL, QRLSR, RCVGYR, and KRQITWLR.

This sequence belongs to the IPP transferase family. In terms of assembly, monomer. Requires Mg(2+) as cofactor.

It carries out the reaction adenosine(37) in tRNA + dimethylallyl diphosphate = N(6)-dimethylallyladenosine(37) in tRNA + diphosphate. Its function is as follows. Catalyzes the transfer of a dimethylallyl group onto the adenine at position 37 in tRNAs that read codons beginning with uridine, leading to the formation of N6-(dimethylallyl)adenosine (i(6)A). In Photorhabdus laumondii subsp. laumondii (strain DSM 15139 / CIP 105565 / TT01) (Photorhabdus luminescens subsp. laumondii), this protein is tRNA dimethylallyltransferase.